We begin with the raw amino-acid sequence, 31 residues long: Cytochrome b6-f complex subunit 6 (31 aa).

The helical transmembrane segment at 4-24 threads the bilayer; it reads IFSYIALLLSALVITLTCYIG.

Belongs to the PetL family. As to quaternary structure, the 4 large subunits of the cytochrome b6-f complex are cytochrome b6, subunit IV (17 kDa polypeptide, PetD), cytochrome f and the Rieske protein, while the 4 small subunits are PetG, PetL, PetM and PetN. The complex functions as a dimer.

It localises to the plastid. The protein resides in the chloroplast thylakoid membrane. In terms of biological role, component of the cytochrome b6-f complex, which mediates electron transfer between photosystem II (PSII) and photosystem I (PSI), cyclic electron flow around PSI, and state transitions. PetL is important for photoautotrophic growth as well as for electron transfer efficiency and stability of the cytochrome b6-f complex. This Chlorella vulgaris (Green alga) protein is Cytochrome b6-f complex subunit 6.